Consider the following 446-residue polypeptide: Probable glycine dehydrogenase (decarboxylating) subunit 1 (446 aa).

The protein belongs to the GcvP family. N-terminal subunit subfamily. The glycine cleavage system is composed of four proteins: P, T, L and H. In this organism, the P 'protein' is a heterodimer of two subunits.

It catalyses the reaction N(6)-[(R)-lipoyl]-L-lysyl-[glycine-cleavage complex H protein] + glycine + H(+) = N(6)-[(R)-S(8)-aminomethyldihydrolipoyl]-L-lysyl-[glycine-cleavage complex H protein] + CO2. In terms of biological role, the glycine cleavage system catalyzes the degradation of glycine. The P protein binds the alpha-amino group of glycine through its pyridoxal phosphate cofactor; CO(2) is released and the remaining methylamine moiety is then transferred to the lipoamide cofactor of the H protein. This chain is Probable glycine dehydrogenase (decarboxylating) subunit 1, found in Methylocella silvestris (strain DSM 15510 / CIP 108128 / LMG 27833 / NCIMB 13906 / BL2).